The chain runs to 482 residues: Nucleoside triphosphate pyrophosphatase/Nudix hydrolase fusion protein (482 aa).

The segment at 1–299 (MSIPLILASK…DLWNVGRGEL (299 aa)) is maf-like. The active-site Proton acceptor is aspartate 167. The 138-residue stretch at 338 to 475 (GTNGASGILL…TDWPRFAARL (138 aa)) folds into the Nudix hydrolase domain.

It in the N-terminal section; belongs to the Maf family. A divalent metal cation serves as cofactor.

The protein resides in the cytoplasm. It carries out the reaction a ribonucleoside 5'-triphosphate + H2O = a ribonucleoside 5'-phosphate + diphosphate + H(+). The catalysed reaction is a 2'-deoxyribonucleoside 5'-triphosphate + H2O = a 2'-deoxyribonucleoside 5'-phosphate + diphosphate + H(+). Functionally, nucleoside triphosphate pyrophosphatase. May have a dual role in cell division arrest and in preventing the incorporation of modified nucleotides into cellular nucleic acids. This chain is Nucleoside triphosphate pyrophosphatase/Nudix hydrolase fusion protein, found in Bifidobacterium longum (strain NCC 2705).